A 67-amino-acid polypeptide reads, in one-letter code: DNA gyrase inhibitor YacG (67 aa).

C10, C13, C29, and C33 together coordinate Zn(2+). Over residues 44 to 57 (EEKRIPSSGDRSDT) the composition is skewed to basic and acidic residues. Positions 44-67 (EEKRIPSSGDRSDTDGWSEEENQP) are disordered.

Belongs to the DNA gyrase inhibitor YacG family. As to quaternary structure, interacts with GyrB. Requires Zn(2+) as cofactor.

In terms of biological role, inhibits all the catalytic activities of DNA gyrase by preventing its interaction with DNA. Acts by binding directly to the C-terminal domain of GyrB, which probably disrupts DNA binding by the gyrase. The protein is DNA gyrase inhibitor YacG of Cronobacter sakazakii (strain ATCC BAA-894) (Enterobacter sakazakii).